The following is a 270-amino-acid chain: Calpain small subunit 1 (270 aa).

N-acetylmethionine is present on Met1. Ser6 carries the phosphoserine modification. An EF-hand 1; atypical domain is found at 98-132 (EEERQFRKLFVQLAGDDMEVSATELMNILNKVVTR). 10 residues coordinate Ca(2+): Ala111, Asp114, Glu116, Glu121, Asp139, Asp154, Asp156, Thr158, Lys160, and Glu165. EF-hand domains lie at 141–174 (FGID…NNIK), 171–206 (NNIK…AGFH), 207–235 (LNQH…ISCL), and 236–270 (VRLD…TMYS). The residue at position 181 (Lys181) is an N6-acetyllysine. Positions 184, 186, 188, 190, 195, and 227 each coordinate Ca(2+).

As to quaternary structure, homodimer or heterodimer of a large (catalytic) and a small (regulatory) subunit. In presence of calcium, the heterodimer dissociates.

The protein localises to the cytoplasm. It is found in the cell membrane. Regulatory subunit of the calcium-regulated non-lysosomal thiol-protease which catalyzes limited proteolysis of substrates involved in cytoskeletal remodeling and signal transduction. Essential for embryonic development. The polypeptide is Calpain small subunit 1 (Capns1) (Rattus norvegicus (Rat)).